A 69-amino-acid chain; its full sequence is MSVLTSLLLRGLTGSARRLPVPRAKVHSMPPEEELGIMEKAIGLTFCFVSLFLPAGWILSHLEDYKRPE.

The N-terminal 25 residues, 1 to 25 (MSVLTSLLLRGLTGSARRLPVPRAK), are a transit peptide targeting the mitochondrion. Topologically, residues 26-36 (VHSMPPEEELG) are mitochondrial matrix. A helical transmembrane segment spans residues 37-60 (IMEKAIGLTFCFVSLFLPAGWILS). Residues 61–69 (HLEDYKRPE) lie on the Mitochondrial intermembrane side of the membrane.

Belongs to the cytochrome c oxidase VIII family. In terms of assembly, component of the cytochrome c oxidase (complex IV, CIV), a multisubunit enzyme composed of 14 subunits. The complex is composed of a catalytic core of 3 subunits MT-CO1, MT-CO2 and MT-CO3, encoded in the mitochondrial DNA, and 11 supernumerary subunits COX4I, COX5A, COX5B, COX6A, COX6B, COX6C, COX7A, COX7B, COX7C, COX8 and NDUFA4, which are encoded in the nuclear genome. The complex exists as a monomer or a dimer and forms supercomplexes (SCs) in the inner mitochondrial membrane with NADH-ubiquinone oxidoreductase (complex I, CI) and ubiquinol-cytochrome c oxidoreductase (cytochrome b-c1 complex, complex III, CIII), resulting in different assemblies (supercomplex SCI(1)III(2)IV(1) and megacomplex MCI(2)III(2)IV(2)). Post-translationally, in response to mitochondrial stress, the precursor protein is ubiquitinated by the SIFI complex in the cytoplasm before mitochondrial import, leading to its degradation. Within the SIFI complex, UBR4 initiates ubiquitin chain that are further elongated or branched by KCMF1.

It localises to the mitochondrion inner membrane. Its pathway is energy metabolism; oxidative phosphorylation. In terms of biological role, component of the cytochrome c oxidase, the last enzyme in the mitochondrial electron transport chain which drives oxidative phosphorylation. The respiratory chain contains 3 multisubunit complexes succinate dehydrogenase (complex II, CII), ubiquinol-cytochrome c oxidoreductase (cytochrome b-c1 complex, complex III, CIII) and cytochrome c oxidase (complex IV, CIV), that cooperate to transfer electrons derived from NADH and succinate to molecular oxygen, creating an electrochemical gradient over the inner membrane that drives transmembrane transport and the ATP synthase. Cytochrome c oxidase is the component of the respiratory chain that catalyzes the reduction of oxygen to water. Electrons originating from reduced cytochrome c in the intermembrane space (IMS) are transferred via the dinuclear copper A center (CU(A)) of subunit 2 and heme A of subunit 1 to the active site in subunit 1, a binuclear center (BNC) formed by heme A3 and copper B (CU(B)). The BNC reduces molecular oxygen to 2 water molecules using 4 electrons from cytochrome c in the IMS and 4 protons from the mitochondrial matrix. This chain is Cytochrome c oxidase subunit 8A, mitochondrial (COX8A), found in Macaca fascicularis (Crab-eating macaque).